Here is a 176-residue protein sequence, read N- to C-terminus: Nucleoside triphosphate/diphosphate phosphatase (176 aa).

Arg-23 acts as the Proton donor in catalysis. Residues Asn-87, Asp-103, Asp-105, Asp-107, Asp-120, and Glu-123 each coordinate Mg(2+).

It belongs to the Ntdp family. It depends on Mg(2+) as a cofactor.

The catalysed reaction is a ribonucleoside 5'-triphosphate + H2O = a ribonucleoside 5'-diphosphate + phosphate + H(+). It catalyses the reaction a ribonucleoside 5'-diphosphate + H2O = a ribonucleoside 5'-phosphate + phosphate + H(+). In terms of biological role, has nucleoside phosphatase activity towards nucleoside triphosphates and nucleoside diphosphates. This chain is Nucleoside triphosphate/diphosphate phosphatase, found in Bacillus licheniformis (strain ATCC 14580 / DSM 13 / JCM 2505 / CCUG 7422 / NBRC 12200 / NCIMB 9375 / NCTC 10341 / NRRL NRS-1264 / Gibson 46).